The primary structure comprises 432 residues: 3-phosphoshikimate 1-carboxyvinyltransferase (432 aa).

Residues Lys-22, Ser-23, and Arg-27 each coordinate 3-phosphoshikimate. Lys-22 is a binding site for phosphoenolpyruvate. Phosphoenolpyruvate contacts are provided by Gly-96 and Arg-127. Residues Ser-173, Ser-174, Gln-175, Ser-201, Asp-316, Asn-339, and Lys-343 each coordinate 3-phosphoshikimate. A phosphoenolpyruvate-binding site is contributed by Gln-175. The Proton acceptor role is filled by Asp-316. Residues Arg-347, Arg-391, and Lys-416 each contribute to the phosphoenolpyruvate site.

The protein belongs to the EPSP synthase family. In terms of assembly, monomer.

The protein resides in the cytoplasm. It carries out the reaction 3-phosphoshikimate + phosphoenolpyruvate = 5-O-(1-carboxyvinyl)-3-phosphoshikimate + phosphate. It participates in metabolic intermediate biosynthesis; chorismate biosynthesis; chorismate from D-erythrose 4-phosphate and phosphoenolpyruvate: step 6/7. Functionally, catalyzes the transfer of the enolpyruvyl moiety of phosphoenolpyruvate (PEP) to the 5-hydroxyl of shikimate-3-phosphate (S3P) to produce enolpyruvyl shikimate-3-phosphate and inorganic phosphate. This chain is 3-phosphoshikimate 1-carboxyvinyltransferase, found in Actinobacillus pleuropneumoniae serotype 5b (strain L20).